A 271-amino-acid chain; its full sequence is Phosphate import ATP-binding protein PstB (271 aa).

In terms of domain architecture, ABC transporter spans 25–266 (VDVRQLSLWY…PKHPYTEAYI (242 aa)). 57-64 (GPSGCGKS) is a binding site for ATP.

Belongs to the ABC transporter superfamily. Phosphate importer (TC 3.A.1.7) family. In terms of assembly, the complex is composed of two ATP-binding proteins (PstB), two transmembrane proteins (PstC and PstA) and a solute-binding protein (PstS).

The protein resides in the cell inner membrane. The catalysed reaction is phosphate(out) + ATP + H2O = ADP + 2 phosphate(in) + H(+). Part of the ABC transporter complex PstSACB involved in phosphate import. Responsible for energy coupling to the transport system. This chain is Phosphate import ATP-binding protein PstB, found in Thermus thermophilus (strain ATCC BAA-163 / DSM 7039 / HB27).